The sequence spans 260 residues: UPF0246 protein Bxeno_A1262 (260 aa).

This sequence belongs to the UPF0246 family.

The protein is UPF0246 protein Bxeno_A1262 of Paraburkholderia xenovorans (strain LB400).